The following is a 76-amino-acid chain: U-actitoxin-Avd8c (76 aa).

An N-terminal signal peptide occupies residues 1 to 16; that stretch reads LVIVFVVLLGVPLISA. A propeptide spanning residues 17-33 is cleaved from the precursor; the sequence is NEEELLAILQDQRNDAR.

The protein belongs to the sea anemone 8 toxin family.

Its subcellular location is the secreted. It localises to the nematocyst. This is U-actitoxin-Avd8c from Anemonia viridis (Snakelocks anemone).